Reading from the N-terminus, the 100-residue chain is Large ribosomal subunit protein uL23 (100 aa).

Belongs to the universal ribosomal protein uL23 family. In terms of assembly, part of the 50S ribosomal subunit. Contacts protein L29, and trigger factor when it is bound to the ribosome.

Functionally, one of the early assembly proteins it binds 23S rRNA. One of the proteins that surrounds the polypeptide exit tunnel on the outside of the ribosome. Forms the main docking site for trigger factor binding to the ribosome. This Photobacterium profundum (strain SS9) protein is Large ribosomal subunit protein uL23.